We begin with the raw amino-acid sequence, 921 residues long: Protein translocase subunit SecA (921 aa).

ATP contacts are provided by residues glutamine 87, 105-109, and aspartate 515; that span reads GEGKT. The tract at residues 872–901 is disordered; the sequence is DMEVAGSTGDRGAALDIQPAPVRSGPKIGR. Residues cysteine 905, cysteine 907, cysteine 916, and cysteine 917 each coordinate Zn(2+).

The protein belongs to the SecA family. In terms of assembly, monomer and homodimer. Part of the essential Sec protein translocation apparatus which comprises SecA, SecYEG and auxiliary proteins SecDF-YajC and YidC. The cofactor is Zn(2+).

Its subcellular location is the cell inner membrane. The protein localises to the cytoplasm. It carries out the reaction ATP + H2O + cellular proteinSide 1 = ADP + phosphate + cellular proteinSide 2.. In terms of biological role, part of the Sec protein translocase complex. Interacts with the SecYEG preprotein conducting channel. Has a central role in coupling the hydrolysis of ATP to the transfer of proteins into and across the cell membrane, serving both as a receptor for the preprotein-SecB complex and as an ATP-driven molecular motor driving the stepwise translocation of polypeptide chains across the membrane. This chain is Protein translocase subunit SecA, found in Polynucleobacter asymbioticus (strain DSM 18221 / CIP 109841 / QLW-P1DMWA-1) (Polynucleobacter necessarius subsp. asymbioticus).